Consider the following 338-residue polypeptide: Solute carrier family 35 member G3 (338 aa).

Residues 1–24 are disordered; that stretch reads MAGSHPYFNQPDSTHPSPPSAPPS. A run of 9 helical transmembrane segments spans residues 37-57, 67-87, 105-125, 160-180, 185-205, 221-241, 250-270, 281-301, and 305-325; these read TSGL…VGPL, LPSL…ALLL, FFCA…VQVV, CGLL…LWTL, TGVY…ALSL, TVAF…LFVL, LLSW…FTCV, LVCA…YYML, and VAPS…IITA. The EamA 1 domain occupies 49-174; it reads LPAGFVGPLS…CILGLIIIVG (126 aa). Positions 272-325 constitute an EamA 2 domain; sequence YAVTKAHPALVCAVLHSEVVVALILQYYMLHETVAPSDIVAAGVVLGSIAIITA.

This sequence belongs to the SLC35G solute transporter family. In terms of tissue distribution, expressed in testis.

The protein resides in the membrane. This is Solute carrier family 35 member G3 (SLC35G3) from Homo sapiens (Human).